A 287-amino-acid polypeptide reads, in one-letter code: Fructose-1,6-bisphosphatase class 1 (287 aa).

Mg(2+)-binding residues include Glu-67, Asp-87, Leu-89, and Asp-90. Substrate contacts are provided by residues 90–93 (DGSS), Tyr-195, and Lys-225. Glu-231 is a Mg(2+) binding site.

This sequence belongs to the FBPase class 1 family. As to quaternary structure, homotetramer. Mg(2+) is required as a cofactor.

It localises to the cytoplasm. It catalyses the reaction beta-D-fructose 1,6-bisphosphate + H2O = beta-D-fructose 6-phosphate + phosphate. The protein operates within carbohydrate biosynthesis; gluconeogenesis. In Halobacterium salinarum (strain ATCC 29341 / DSM 671 / R1), this protein is Fructose-1,6-bisphosphatase class 1.